An 80-amino-acid polypeptide reads, in one-letter code: MRKLLIQIIRLYQRFISPLTPPSCRFYPTCSAYGIEAIETHGAIKGSYLAIKRILKCHPFHPGGVDPVPECQHTKHKKTP.

Belongs to the UPF0161 family.

It localises to the cell membrane. Functionally, could be involved in insertion of integral membrane proteins into the membrane. This chain is Putative membrane protein insertion efficiency factor, found in Shouchella clausii (strain KSM-K16) (Alkalihalobacillus clausii).